Reading from the N-terminus, the 66-residue chain is Alpha-like toxin BmK-M7 (66 aa).

An LCN-type CS-alpha/beta domain is found at 2 to 64; it reads RDGYIALPHN…VPIRVPGRCH (63 aa). 4 cysteine pairs are disulfide-bonded: Cys-12-Cys-63, Cys-16-Cys-36, Cys-22-Cys-46, and Cys-26-Cys-48.

The protein belongs to the long (4 C-C) scorpion toxin superfamily. Sodium channel inhibitor family. Alpha subfamily. Expressed by the venom gland.

It is found in the secreted. In terms of biological role, alpha toxins bind voltage-independently at site-3 of sodium channels (Nav) and inhibit the inactivation of the activated channels, thereby blocking neuronal transmission. This toxin is active on both mammals and insects. It can be considered as a cardiotoxin, as it can bind to human cardiac sodium channel and modify its normal properties. In Olivierus martensii (Manchurian scorpion), this protein is Alpha-like toxin BmK-M7.